Here is a 139-residue protein sequence, read N- to C-terminus: MPDLSAALCRCGAQRSPRVSTHSTGPSMGLPTLEVSARSRTWTTIHFSLQRPTSMTRSAMYLLETVSQCSHFLLEATCLMLDLAMKFQALLESRDALPPTDLGTTMPTTNRSRSARPTPRPMGSTSTQQHPQRSRSTCR.

Residues 94–139 form a disordered region; the sequence is RDALPPTDLGTTMPTTNRSRSARPTPRPMGSTSTQQHPQRSRSTCR. Residues 102–112 show a composition bias toward polar residues; the sequence is LGTTMPTTNRS.

In Channa lucius (Forest snakehead), this protein is Protein VP5 (VP5).